The primary structure comprises 459 residues: MAP kinase-interacting serine/threonine-protein kinase 2 (459 aa).

Residues 37–67 (DFSPQCEARPDMPSSQPIDIPDAKKRGRKKK) are disordered. The short motif at 60–66 (KKRGRKK) is the Nuclear localization signal element. At Ser74 the chain carries Phosphoserine. Positions 84-368 (QLQEDVLGEG…AAQVLQHPWV (285 aa)) constitute a Protein kinase domain. ATP is bound by residues 90–98 (LGEGAHARV) and Lys113. A staurosporine-binding site is contributed by 160 to 162 (EKM). Asp205 (proton acceptor) is an active-site residue. Residue Glu209 coordinates staurosporine. Thr244 and Thr249 each carry phosphothreonine. Zn(2+)-binding residues include Cys299, Cys311, and Cys314. At Thr379 the chain carries Phosphothreonine. Residues Ser431 and Ser434 each carry the phosphoserine modification. The MAP kinase binding signature appears at 438–442 (LAQRR). Ser446 is subject to Phosphoserine. Thr450 bears the Phosphothreonine mark.

It belongs to the protein kinase superfamily. CAMK Ser/Thr protein kinase family. As to quaternary structure, interacts with ESR2 and EIF4E in the nucleus. Monomer. Interacts with the C-terminal regions of EIF4G1 and EIF4G2; this interaction is promoted when MAPK pathways are repressed but repressed upon ERK proteins activation. Also binds to dephosphorylated MAPK3/ERK1 and MAPK1/ERK2. Interaction with phosphorylated MAPK3/ERK1 and MAPK1/ERK2 protects it from dephosphorylation and inactivation. It depends on Mg(2+) as a cofactor. Requires Zn(2+) as cofactor. Dual phosphorylation of Thr-244 and Thr-249 activates the kinase. Phosphorylation of Thr-379 activates the kinase. Phosphorylated upon arsenic trioxide As(2)O(3) treatment. Phosphorylated by MAPK1/ERK2, MAPK11 and MAPK14. Dephosphorylated by PP2A. Ubiquitously expressed in all tissues examined, with high levels in skeletal muscle and low levels in brain.

Its subcellular location is the cytoplasm. It localises to the nucleus. The protein localises to the PML body. The catalysed reaction is L-seryl-[protein] + ATP = O-phospho-L-seryl-[protein] + ADP + H(+). It carries out the reaction L-threonyl-[protein] + ATP = O-phospho-L-threonyl-[protein] + ADP + H(+). With respect to regulation, inhibited by CGP57380 and staurosporine. In terms of biological role, serine/threonine-protein kinase that phosphorylates SFPQ/PSF, HNRNPA1 and EIF4E. May play a role in the response to environmental stress and cytokines. Appears to regulate translation by phosphorylating EIF4E, thus increasing the affinity of this protein for the 7-methylguanosine-containing mRNA cap. Required for mediating PP2A-inhibition-induced EIF4E phosphorylation. Triggers EIF4E shuttling from cytoplasm to nucleus. Enhances the formation of EIF4F complex in pachytene spermatocytes, thus promoting mRNA translation during spermatogenesis. Displays a high basal kinase activity. Acts as a mediator of the suppressive effects of IFNgamma on hematopoiesis. Negative regulator for signals that control generation of arsenic trioxide As(2)O(3)-dependent apoptosis and anti-leukemic responses. Involved in anti-apoptotic signaling in response to serum withdrawal. The chain is MAP kinase-interacting serine/threonine-protein kinase 2 (Mknk2) from Mus musculus (Mouse).